Reading from the N-terminus, the 129-residue chain is Translation initiation factor 5A (129 aa).

K36 is modified (hypusine).

The protein belongs to the eIF-5A family.

Its subcellular location is the cytoplasm. Functions by promoting the formation of the first peptide bond. The polypeptide is Translation initiation factor 5A (Picrophilus torridus (strain ATCC 700027 / DSM 9790 / JCM 10055 / NBRC 100828 / KAW 2/3)).